The chain runs to 156 residues: Ubiquitin-like protein 4A (156 aa).

The Ubiquitin-like domain maps to methionine 1–glutamate 76.

In terms of assembly, component of the bag6/bat3 complex.

It is found in the cytoplasm. The protein resides in the cytosol. Its subcellular location is the nucleus. Functionally, as part of a cytosolic protein quality control complex, the bag6/bat3 complex, maintains misfolded and hydrophobic patches-containing proteins in a soluble state and participates in their proper delivery to the endoplasmic reticulum or alternatively can promote their sorting to the proteasome where they undergo degradation. The bag6/bat3 complex is involved in the post-translational delivery of tail-anchored/type II transmembrane proteins to the endoplasmic reticulum membrane. Similarly, the bag6/bat3 complex also functions as a sorting platform for proteins of the secretory pathway that are mislocalized to the cytosol either delivering them to the proteasome for degradation or to the endoplasmic reticulum. The bag6/bat3 complex also plays a role in the endoplasmic reticulum-associated degradation (ERAD), a quality control mechanism that eliminates unwanted proteins of the endoplasmic reticulum through their retrotranslocation to the cytosol and their targeting to the proteasome. It maintains these retrotranslocated proteins in an unfolded yet soluble state condition in the cytosol to ensure their proper delivery to the proteasome. The chain is Ubiquitin-like protein 4A (ubl4a) from Anoplopoma fimbria (Sablefish).